A 477-amino-acid chain; its full sequence is Bifunctional protein HldE (477 aa).

The segment at 1–318 (MKVTLPEFER…ENAVRGRADT (318 aa)) is ribokinase. Lys-179 is subject to N6-acetyllysine. ATP is bound at residue 195-198 (NLSE). The active site involves Asp-264. The tract at residues 344-477 (MTNGVFDILH…IKKIQQDKKG (134 aa)) is cytidylyltransferase.

This sequence in the N-terminal section; belongs to the carbohydrate kinase PfkB family. In the C-terminal section; belongs to the cytidylyltransferase family. In terms of assembly, homodimer.

It carries out the reaction D-glycero-beta-D-manno-heptose 7-phosphate + ATP = D-glycero-beta-D-manno-heptose 1,7-bisphosphate + ADP + H(+). The enzyme catalyses D-glycero-beta-D-manno-heptose 1-phosphate + ATP + H(+) = ADP-D-glycero-beta-D-manno-heptose + diphosphate. Its pathway is nucleotide-sugar biosynthesis; ADP-L-glycero-beta-D-manno-heptose biosynthesis; ADP-L-glycero-beta-D-manno-heptose from D-glycero-beta-D-manno-heptose 7-phosphate: step 1/4. The protein operates within nucleotide-sugar biosynthesis; ADP-L-glycero-beta-D-manno-heptose biosynthesis; ADP-L-glycero-beta-D-manno-heptose from D-glycero-beta-D-manno-heptose 7-phosphate: step 3/4. Functionally, catalyzes the phosphorylation of D-glycero-D-manno-heptose 7-phosphate at the C-1 position to selectively form D-glycero-beta-D-manno-heptose-1,7-bisphosphate. In terms of biological role, catalyzes the ADP transfer from ATP to D-glycero-beta-D-manno-heptose 1-phosphate, yielding ADP-D-glycero-beta-D-manno-heptose. The polypeptide is Bifunctional protein HldE (Escherichia fergusonii (strain ATCC 35469 / DSM 13698 / CCUG 18766 / IAM 14443 / JCM 21226 / LMG 7866 / NBRC 102419 / NCTC 12128 / CDC 0568-73)).